A 309-amino-acid chain; its full sequence is Porphobilinogen deaminase (309 aa).

Cys241 is subject to S-(dipyrrolylmethanemethyl)cysteine.

It belongs to the HMBS family. As to quaternary structure, monomer. Dipyrromethane serves as cofactor.

It carries out the reaction 4 porphobilinogen + H2O = hydroxymethylbilane + 4 NH4(+). The protein operates within porphyrin-containing compound metabolism; protoporphyrin-IX biosynthesis; coproporphyrinogen-III from 5-aminolevulinate: step 2/4. In terms of biological role, tetrapolymerization of the monopyrrole PBG into the hydroxymethylbilane pre-uroporphyrinogen in several discrete steps. The sequence is that of Porphobilinogen deaminase from Desulforamulus reducens (strain ATCC BAA-1160 / DSM 100696 / MI-1) (Desulfotomaculum reducens).